A 335-amino-acid chain; its full sequence is Peroxidase 2 (335 aa).

An N-terminal signal peptide occupies residues 1–29; sequence MAAATAPKTMPSSVFAAALLLLAAAACQA. 4 disulfides stabilise this stretch: C44–C125, C77–C82, C131–C329, and C212–C238. H75 serves as the catalytic Proton acceptor. Residues D76, V79, G81, D83, and S85 each coordinate Ca(2+). 2 N-linked (GlcNAc...) asparagine glycosylation sites follow: N166 and N180. Residue H205 participates in heme b binding. T206 serves as a coordination point for Ca(2+). A glycan (N-linked (GlcNAc...) asparagine) is linked at N241. D253, T256, and D261 together coordinate Ca(2+).

It belongs to the peroxidase family. Classical plant (class III) peroxidase subfamily. It depends on heme b as a cofactor. Ca(2+) is required as a cofactor. In terms of tissue distribution, expressed in the elongating region of young roots, and in root vascular tissues and epidermis.

The protein resides in the secreted. The enzyme catalyses 2 a phenolic donor + H2O2 = 2 a phenolic radical donor + 2 H2O. Functionally, removal of H(2)O(2), oxidation of toxic reductants, biosynthesis and degradation of lignin, suberization, auxin catabolism, response to environmental stresses such as wounding, pathogen attack and oxidative stress. These functions might be dependent on each isozyme/isoform in each plant tissue. This chain is Peroxidase 2 (PER2), found in Zea mays (Maize).